The following is a 448-amino-acid chain: Methylenetetrahydrofolate--tRNA-(uracil-5-)-methyltransferase TrmFO (448 aa).

FAD is bound at residue 13–18 (GAGLAG).

Belongs to the MnmG family. TrmFO subfamily. FAD is required as a cofactor.

The protein resides in the cytoplasm. The enzyme catalyses uridine(54) in tRNA + (6R)-5,10-methylene-5,6,7,8-tetrahydrofolate + NADH + H(+) = 5-methyluridine(54) in tRNA + (6S)-5,6,7,8-tetrahydrofolate + NAD(+). It catalyses the reaction uridine(54) in tRNA + (6R)-5,10-methylene-5,6,7,8-tetrahydrofolate + NADPH + H(+) = 5-methyluridine(54) in tRNA + (6S)-5,6,7,8-tetrahydrofolate + NADP(+). Catalyzes the folate-dependent formation of 5-methyl-uridine at position 54 (M-5-U54) in all tRNAs. This Streptococcus pyogenes serotype M4 (strain MGAS10750) protein is Methylenetetrahydrofolate--tRNA-(uracil-5-)-methyltransferase TrmFO.